The following is a 196-amino-acid chain: MSSIKLIVGLANPGAEYAQTRHNAGAWYVDLLAQRHNQQLKEESKFYGYTARLNLAGNDVRLLVPTTFMNLSGKAVLAMANFYRIEPDEILVAHDELDIPPGVAKIKLGGGNGGHNGLKDIQSKFGNNPNFYRLRIGIGHPGDKNKVVGFVLGKPPASEQKMIDEAIDEAARCTEILLTDGLEKTVRRLHSFKAQA.

TRNA is bound at residue tyrosine 17. The active-site Proton acceptor is the histidine 22. Phenylalanine 68, asparagine 70, and asparagine 116 together coordinate tRNA.

Belongs to the PTH family. Monomer.

The protein resides in the cytoplasm. It catalyses the reaction an N-acyl-L-alpha-aminoacyl-tRNA + H2O = an N-acyl-L-amino acid + a tRNA + H(+). Its function is as follows. Hydrolyzes ribosome-free peptidyl-tRNAs (with 1 or more amino acids incorporated), which drop off the ribosome during protein synthesis, or as a result of ribosome stalling. Catalyzes the release of premature peptidyl moieties from peptidyl-tRNA molecules trapped in stalled 50S ribosomal subunits, and thus maintains levels of free tRNAs and 50S ribosomes. The protein is Peptidyl-tRNA hydrolase of Serratia proteamaculans (strain 568).